A 588-amino-acid polypeptide reads, in one-letter code: MSNASDHVDVLIIGAGPAGLTTANSFNGSNCRVRLIDWKPAPLETGRADGLKSISLEVLDSFGIGDRVLNDCQPCEEIVLWNPGKDGVIARTMTIPDKVEELGQIERVMVENLYRHKTVQVNWNTQPVRLHIAPVTKDEPEAHPLTITVQNKETLGQETIRAKYVVGADGAHSWLRKYLNIGFSGDVTDSTWGVMNLVPKTDFPDIRKVFVVHSRAGTVMGVPREDKLVRLYISMDGGNRHTSIDAKSITAENLLQAARAILAPYRLDAARIPWWSAYCVGQRVADEFARHNRIFLAGDAVHTHSPKAGQGMNTSIQDGYNIGWKLRYCLEQKASPALLSTYQTERRPIAQALIDFDRKYLESFTRRDITHQEFLEAYLAGQRFTTGIQIQYPPSLIVTAKHLHAPSHPLATNLAPGKRLPDFQMVNQSDAVPIQAYHRFTSDGRFRLLVFPGDISQALAFGRFSRLGDWLTSHLPPSSGLEIITIHGARRADVELMDLHPAFRPWSDEEGWNYWTVYADDDSYHKGHGHVYERCGISKEDGVLVLLRPDGYISLIASFDETHELIDFFDGLQSGPRTVPQPERRANL.

FAD is bound by residues 9–38, 17–18, 37–39, 45–50, tyrosine 232, 289–299, aspartate 299, and 309–313; these read DVLI…LIDW, PA, DWK, TGRADG, ARHNRIFLAGD, and GQGMN. Substrate-binding residues include aspartate 49 and tyrosine 232.

This sequence belongs to the PheA/TfdB FAD monooxygenase family. As to quaternary structure, homodimer. FAD serves as cofactor.

It functions in the pathway secondary metabolite biosynthesis. Phenol 2-monooxygenase; part of the gene cluster that mediates the biosynthesis of the isoquinoline alkaloids fumisoquin A, fumisoquin B and fumisoquin C; as well as small amounts of fumipyrrole as a shunt metabolite. The products of the cluster lead to a brown coloration and are important for growth and conidiation. The nonribosomal peptide synthetase-like protein fsqF, which lacks a canonical condensation domain, is required for addition of a serine-derived dehydroalanine moiety to activated tyrosine but is not essential for the subsequent steps leading to isoquinoline formation. A different enzyme, most likely the ATP-grasp enzyme fsqD, is responsible for activation of tyrosine. Three additional enzymes encoded by the fsq cluster, the N-methyltransferase fsqC, the phenol 2-monooxygenase fsqG and the FAD-dependent oxidase fsqB, catalyze the formation of the isoquinoline ring system in the fumisoquins. FsqB converts the fspF thiolation domain-bound (2S,4S,5S)-2-amino-6-(3,4-dihydroxyphenyl)-4-hydroxy-5-(methylamino)hexanoyl into isoquinoline. The cyclization most likely proceeds via a two-step mechanism, beginning with FAD-dependent oxidation of the methyl group to an iminium species followed by electrophilic attack on the deprotonated phenol. This is Phenol 2-monooxygenase fsqG from Aspergillus fumigatus (strain ATCC MYA-4609 / CBS 101355 / FGSC A1100 / Af293) (Neosartorya fumigata).